The primary structure comprises 174 residues: Ribosome maturation factor RimM (174 aa).

The PRC barrel domain maps to 98–171 (EGEFYFHQII…TIHIEVMEGL (74 aa)).

The protein belongs to the RimM family. In terms of assembly, binds ribosomal protein uS19.

The protein resides in the cytoplasm. Its function is as follows. An accessory protein needed during the final step in the assembly of 30S ribosomal subunit, possibly for assembly of the head region. Essential for efficient processing of 16S rRNA. May be needed both before and after RbfA during the maturation of 16S rRNA. It has affinity for free ribosomal 30S subunits but not for 70S ribosomes. The polypeptide is Ribosome maturation factor RimM (Bacillus pumilus (strain SAFR-032)).